Here is a 138-residue protein sequence, read N- to C-terminus: Ferredoxin-2 (138 aa).

Residues 27–117 (ADANLQSTDF…DAKIVYNLKH (91 aa)) enclose the 2Fe-2S ferredoxin-type domain. Cys-62, Cys-67, Cys-70, and Cys-100 together coordinate [2Fe-2S] cluster.

It belongs to the 2Fe2S plant-type ferredoxin family. [2Fe-2S] cluster serves as cofactor.

Its function is as follows. Ferredoxins are iron-sulfur proteins that transfer electrons in a wide variety of metabolic reactions. The protein is Ferredoxin-2 (fer2) of Haloarcula marismortui (strain ATCC 43049 / DSM 3752 / JCM 8966 / VKM B-1809) (Halobacterium marismortui).